We begin with the raw amino-acid sequence, 557 residues long: 2-succinyl-5-enolpyruvyl-6-hydroxy-3-cyclohexene-1-carboxylate synthase (557 aa).

Belongs to the TPP enzyme family. MenD subfamily. In terms of assembly, homodimer. Mg(2+) serves as cofactor. It depends on Mn(2+) as a cofactor. Thiamine diphosphate is required as a cofactor.

It carries out the reaction isochorismate + 2-oxoglutarate + H(+) = 5-enolpyruvoyl-6-hydroxy-2-succinyl-cyclohex-3-ene-1-carboxylate + CO2. The protein operates within quinol/quinone metabolism; 1,4-dihydroxy-2-naphthoate biosynthesis; 1,4-dihydroxy-2-naphthoate from chorismate: step 2/7. It functions in the pathway quinol/quinone metabolism; menaquinone biosynthesis. Functionally, catalyzes the thiamine diphosphate-dependent decarboxylation of 2-oxoglutarate and the subsequent addition of the resulting succinic semialdehyde-thiamine pyrophosphate anion to isochorismate to yield 2-succinyl-5-enolpyruvyl-6-hydroxy-3-cyclohexene-1-carboxylate (SEPHCHC). This Yersinia enterocolitica serotype O:8 / biotype 1B (strain NCTC 13174 / 8081) protein is 2-succinyl-5-enolpyruvyl-6-hydroxy-3-cyclohexene-1-carboxylate synthase.